A 388-amino-acid chain; its full sequence is Sulfate adenylyltransferase (388 aa).

The protein belongs to the sulfate adenylyltransferase family.

It carries out the reaction sulfate + ATP + H(+) = adenosine 5'-phosphosulfate + diphosphate. It participates in sulfur metabolism; hydrogen sulfide biosynthesis; sulfite from sulfate: step 1/3. This chain is Sulfate adenylyltransferase, found in Trichodesmium erythraeum (strain IMS101).